Consider the following 499-residue polypeptide: Cysteine--tRNA ligase (499 aa).

Residue C31 coordinates Zn(2+). A 'HIGH' region motif is present at residues 33–43 (VTVYDLCHLGH). The Zn(2+) site is built by C215, H240, and E244. The 'KMSKS' region signature appears at 272-276 (KMSKS). K275 provides a ligand contact to ATP.

This sequence belongs to the class-I aminoacyl-tRNA synthetase family. As to quaternary structure, monomer. Zn(2+) serves as cofactor.

It is found in the cytoplasm. The enzyme catalyses tRNA(Cys) + L-cysteine + ATP = L-cysteinyl-tRNA(Cys) + AMP + diphosphate. This Synechococcus sp. (strain WH7803) protein is Cysteine--tRNA ligase.